The primary structure comprises 335 residues: MEQPWPPPGPWSFPRTGGETEEESDLDVSPSSSHYSPVPDGGAQMYSHGIELACQRQKEFVKSSVACKWNLAEAQQKLGSLALHNSESLDQEHAKAQTAVSELRQREEEWRQKEEALVQRERTCLWNVDAISKDVFNKSFINQDKRKTEDEDKSQSFMQKYEQKIRHFGMLSRWDDSQRFLSDHPYLVCEETAKYLILWCFHLEAEQKGALMEQIAHQAVVMQFIMEMAKNCNVDPRGCFRLFFQKAKAEEEGYFEAFKNELEAFKARVRLYAQSQSFAPVTVENHAPHSGVGCIGSAEPLPQNPDSLQCCPPAPLCSVDSVVHKEDDDRMMDTV.

Positions 1–11 (MEQPWPPPGPW) are enriched in pro residues. The tract at residues 1-42 (MEQPWPPPGPWSFPRTGGETEEESDLDVSPSSSHYSPVPDGG) is disordered. The tract at residues 2–170 (EQPWPPPGPW…YEQKIRHFGM (169 aa)) is self-association. Low complexity predominate over residues 27–40 (DVSPSSSHYSPVPD). Phosphoserine is present on residues S32 and S88. The stretch at 84-120 (HNSESLDQEHAKAQTAVSELRQREEEWRQKEEALVQR) forms a coiled coil. Residues 147 to 276 (KTEDEDKSQS…ARVRLYAQSQ (130 aa)) form a self-association and interaction with Hsp90 region. Positions 266-335 (KARVRLYAQS…EDDDRMMDTV (70 aa)) are interaction with Hsp70. The required for interaction with STIP1 stretch occupies residues 277–335 (SFAPVTVENHAPHSGVGCIGSAEPLPQNPDSLQCCPPAPLCSVDSVVHKEDDDRMMDTV).

The protein belongs to the CDC37 family. In terms of assembly, self-associates. Forms complexes with Hsp70 and Hsp90. Interacts with CDC37, FKBP4, PPID and STIP1.

The protein localises to the cytoplasm. In terms of biological role, co-chaperone that binds to numerous proteins and promotes their interaction with Hsp70 and Hsp90. This Rattus norvegicus (Rat) protein is Hsp90 co-chaperone Cdc37-like 1 (Cdc37l1).